Reading from the N-terminus, the 664-residue chain is Lysophospholipase 1 (664 aa).

Positions 1-22 (MKLQSLLVSAAVLTSLTENVNA) are cleaved as a signal peptide. N-linked (GlcNAc...) asparagine glycans are attached at residues asparagine 26, asparagine 33, asparagine 52, asparagine 78, asparagine 92, asparagine 123, asparagine 160, asparagine 170, asparagine 215, asparagine 277, asparagine 307, asparagine 345, asparagine 388, asparagine 459, asparagine 489, asparagine 513, asparagine 541, asparagine 565, and asparagine 582. The PLA2c domain maps to 35 to 586 (TCDDDINLVR…TNYCWNGTID (552 aa)). Residue asparagine 634 is the site of GPI-anchor amidated asparagine attachment. Residues 635-664 (AGNALVNYSNLNTNTFIGVLSVISAVFGLI) constitute a propeptide, removed in mature form.

The protein belongs to the lysophospholipase family.

The protein localises to the cell membrane. It carries out the reaction a 1-acyl-sn-glycero-3-phosphocholine + H2O = sn-glycerol 3-phosphocholine + a fatty acid + H(+). The catalysed reaction is a 1-acyl-sn-glycero-3-phospho-(1D-myo-inositol) + H2O = sn-glycero-3-phospho-1D-myo-inositol + a fatty acid + H(+). It catalyses the reaction a 1-acyl-sn-glycero-3-phospho-L-serine + H2O = sn-glycero-3-phospho-L-serine + a fatty acid + H(+). The enzyme catalyses a 1,2-diacyl-sn-glycero-3-phospho-(1D-myo-inositol) + 2 H2O = sn-glycero-3-phospho-1D-myo-inositol + 2 a carboxylate + 2 H(+). It carries out the reaction a 1,2-diacyl-sn-glycero-3-phospho-L-serine + 2 H2O = sn-glycero-3-phospho-L-serine + 2 a carboxylate + 2 H(+). The catalysed reaction is 2 1-hexadecanoyl-sn-glycero-3-phosphocholine = 1,2-dihexadecanoyl-sn-glycero-3-phosphocholine + sn-glycerol 3-phosphocholine. It catalyses the reaction 1-hexadecanoyl-sn-glycero-3-phosphocholine + H2O = sn-glycerol 3-phosphocholine + hexadecanoate + H(+). The enzyme catalyses 1,2-dihexadecanoyl-sn-glycero-3-phosphocholine + H2O = 1-hexadecanoyl-sn-glycero-3-phosphocholine + hexadecanoate + H(+). In terms of biological role, sequentially removes both fatty acyl groups from diacylglycerophospholipids and therefore has both phospholipase B and lysophospholipase activities. It also displays transacylase activity. Substrate preference is phosphatidylserine &gt; phosphatidylinositol &gt;&gt; phosphatidylcholine &gt; phosphatidylethanolamine. The substrate specificity is pH- and ion-dependent. In contrast with activities observed at optimum pH 3.5, the order of substrate preference at pH 5.5 is phosphatidylcholine = phosphatidylethanolamine &gt;&gt; phosphatidylinositol. Degrades predominantly phosphatidylcholine and to some extent phosphatidylinositol in vivo. This chain is Lysophospholipase 1, found in Saccharomyces cerevisiae (strain ATCC 204508 / S288c) (Baker's yeast).